A 316-amino-acid polypeptide reads, in one-letter code: L-lactate dehydrogenase 3 (316 aa).

Positions 16, 37, 42, and 68 each coordinate NAD(+). Residue arginine 91 coordinates substrate. NAD(+) is bound by residues serine 104, 121–123 (ASN), and threonine 146. Position 123-126 (123-126 (NPVD)) interacts with substrate. 151–154 (DSSR) serves as a coordination point for substrate. Positions 156 and 171 each coordinate beta-D-fructose 1,6-bisphosphate. Histidine 178 acts as the Proton acceptor in catalysis. Residue threonine 233 coordinates substrate.

The protein belongs to the LDH/MDH superfamily. LDH family. In terms of assembly, homotetramer.

The protein localises to the cytoplasm. It carries out the reaction (S)-lactate + NAD(+) = pyruvate + NADH + H(+). It functions in the pathway fermentation; pyruvate fermentation to lactate; (S)-lactate from pyruvate: step 1/1. With respect to regulation, allosterically activated by fructose 1,6-bisphosphate (FBP). Functionally, catalyzes the conversion of lactate to pyruvate. In Bacillus anthracis, this protein is L-lactate dehydrogenase 3.